The following is a 253-amino-acid chain: Large ribosomal subunit protein uL4 (253 aa).

Positions serine 78 to threonine 107 are disordered. Positions arginine 82 to proline 94 are enriched in basic residues. The span at proline 95–threonine 107 shows a compositional bias: basic and acidic residues.

The protein belongs to the universal ribosomal protein uL4 family. Part of the 50S ribosomal subunit.

Its function is as follows. One of the primary rRNA binding proteins, this protein initially binds near the 5'-end of the 23S rRNA. It is important during the early stages of 50S assembly. It makes multiple contacts with different domains of the 23S rRNA in the assembled 50S subunit and ribosome. Functionally, forms part of the polypeptide exit tunnel. The protein is Large ribosomal subunit protein uL4 of Methanosarcina acetivorans (strain ATCC 35395 / DSM 2834 / JCM 12185 / C2A).